We begin with the raw amino-acid sequence, 212 residues long: Thiamine-phosphate synthase (212 aa).

Residues Gln-33–Lys-37 and Asn-65 each bind 4-amino-2-methyl-5-(diphosphooxymethyl)pyrimidine. 2 residues coordinate Mg(2+): Asp-66 and Asp-85. Thr-104 contacts 4-amino-2-methyl-5-(diphosphooxymethyl)pyrimidine. Thr-130–Thr-132 lines the 2-[(2R,5Z)-2-carboxy-4-methylthiazol-5(2H)-ylidene]ethyl phosphate pocket. A 4-amino-2-methyl-5-(diphosphooxymethyl)pyrimidine-binding site is contributed by Lys-133. Position 166 (Gly-166) interacts with 2-[(2R,5Z)-2-carboxy-4-methylthiazol-5(2H)-ylidene]ethyl phosphate.

It belongs to the thiamine-phosphate synthase family. It depends on Mg(2+) as a cofactor.

The catalysed reaction is 2-[(2R,5Z)-2-carboxy-4-methylthiazol-5(2H)-ylidene]ethyl phosphate + 4-amino-2-methyl-5-(diphosphooxymethyl)pyrimidine + 2 H(+) = thiamine phosphate + CO2 + diphosphate. It carries out the reaction 2-(2-carboxy-4-methylthiazol-5-yl)ethyl phosphate + 4-amino-2-methyl-5-(diphosphooxymethyl)pyrimidine + 2 H(+) = thiamine phosphate + CO2 + diphosphate. It catalyses the reaction 4-methyl-5-(2-phosphooxyethyl)-thiazole + 4-amino-2-methyl-5-(diphosphooxymethyl)pyrimidine + H(+) = thiamine phosphate + diphosphate. The protein operates within cofactor biosynthesis; thiamine diphosphate biosynthesis; thiamine phosphate from 4-amino-2-methyl-5-diphosphomethylpyrimidine and 4-methyl-5-(2-phosphoethyl)-thiazole: step 1/1. Its function is as follows. Condenses 4-methyl-5-(beta-hydroxyethyl)thiazole monophosphate (THZ-P) and 2-methyl-4-amino-5-hydroxymethyl pyrimidine pyrophosphate (HMP-PP) to form thiamine monophosphate (TMP). The protein is Thiamine-phosphate synthase of Flavobacterium johnsoniae (strain ATCC 17061 / DSM 2064 / JCM 8514 / BCRC 14874 / CCUG 350202 / NBRC 14942 / NCIMB 11054 / UW101) (Cytophaga johnsonae).